The primary structure comprises 427 residues: Adenylosuccinate synthetase (427 aa).

Residues 12–18 (GDEGKGK) and 40–42 (GHT) contribute to the GTP site. Catalysis depends on Asp-13, which acts as the Proton acceptor. Mg(2+)-binding residues include Asp-13 and Gly-40. Residues 13-16 (DEGK), 38-41 (NAGH), Thr-130, Arg-144, Gln-224, Thr-239, and Arg-303 contribute to the IMP site. His-41 (proton donor) is an active-site residue. 299 to 305 (VTTGRAR) lines the substrate pocket. GTP-binding positions include Arg-305, 331-333 (KID), and 413-415 (SVG).

Belongs to the adenylosuccinate synthetase family. As to quaternary structure, homodimer. Mg(2+) is required as a cofactor.

The protein resides in the cytoplasm. It catalyses the reaction IMP + L-aspartate + GTP = N(6)-(1,2-dicarboxyethyl)-AMP + GDP + phosphate + 2 H(+). Its pathway is purine metabolism; AMP biosynthesis via de novo pathway; AMP from IMP: step 1/2. Functionally, plays an important role in the de novo pathway of purine nucleotide biosynthesis. Catalyzes the first committed step in the biosynthesis of AMP from IMP. In Clostridium novyi (strain NT), this protein is Adenylosuccinate synthetase.